A 229-amino-acid polypeptide reads, in one-letter code: Uracil-DNA glycosylase (229 aa).

Asp70 serves as the catalytic Proton acceptor.

The protein belongs to the uracil-DNA glycosylase (UDG) superfamily. UNG family.

The protein resides in the cytoplasm. It carries out the reaction Hydrolyzes single-stranded DNA or mismatched double-stranded DNA and polynucleotides, releasing free uracil.. Its function is as follows. Excises uracil residues from the DNA which can arise as a result of misincorporation of dUMP residues by DNA polymerase or due to deamination of cytosine. The chain is Uracil-DNA glycosylase from Chlamydia trachomatis serovar A (strain ATCC VR-571B / DSM 19440 / HAR-13).